The sequence spans 348 residues: Nicotinate-nucleotide--dimethylbenzimidazole phosphoribosyltransferase (348 aa).

Catalysis depends on Glu-316, which acts as the Proton acceptor.

It belongs to the CobT family.

The catalysed reaction is 5,6-dimethylbenzimidazole + nicotinate beta-D-ribonucleotide = alpha-ribazole 5'-phosphate + nicotinate + H(+). It functions in the pathway nucleoside biosynthesis; alpha-ribazole biosynthesis; alpha-ribazole from 5,6-dimethylbenzimidazole: step 1/2. Catalyzes the synthesis of alpha-ribazole-5'-phosphate from nicotinate mononucleotide (NAMN) and 5,6-dimethylbenzimidazole (DMB). In Xanthomonas axonopodis pv. citri (strain 306), this protein is Nicotinate-nucleotide--dimethylbenzimidazole phosphoribosyltransferase.